Consider the following 712-residue polypeptide: Phosphoribosylformylglycinamidine synthase subunit PurL (712 aa).

Residue H32 is part of the active site. ATP is bound at residue Y35. Position 76 (E76) interacts with Mg(2+). Residues 77–80 (SHNH) and R99 contribute to the substrate site. The Proton acceptor role is filled by H78. D100 is a binding site for Mg(2+). A substrate-binding site is contributed by Q223. D251 contributes to the Mg(2+) binding site. A substrate-binding site is contributed by 295–297 (ESQ). Residues D470 and G507 each contribute to the ATP site. Residue N508 coordinates Mg(2+). S510 contacts substrate.

It belongs to the FGAMS family. In terms of assembly, monomer. Part of the FGAM synthase complex composed of 1 PurL, 1 PurQ and 2 PurS subunits.

Its subcellular location is the cytoplasm. The catalysed reaction is N(2)-formyl-N(1)-(5-phospho-beta-D-ribosyl)glycinamide + L-glutamine + ATP + H2O = 2-formamido-N(1)-(5-O-phospho-beta-D-ribosyl)acetamidine + L-glutamate + ADP + phosphate + H(+). It functions in the pathway purine metabolism; IMP biosynthesis via de novo pathway; 5-amino-1-(5-phospho-D-ribosyl)imidazole from N(2)-formyl-N(1)-(5-phospho-D-ribosyl)glycinamide: step 1/2. Functionally, part of the phosphoribosylformylglycinamidine synthase complex involved in the purines biosynthetic pathway. Catalyzes the ATP-dependent conversion of formylglycinamide ribonucleotide (FGAR) and glutamine to yield formylglycinamidine ribonucleotide (FGAM) and glutamate. The FGAM synthase complex is composed of three subunits. PurQ produces an ammonia molecule by converting glutamine to glutamate. PurL transfers the ammonia molecule to FGAR to form FGAM in an ATP-dependent manner. PurS interacts with PurQ and PurL and is thought to assist in the transfer of the ammonia molecule from PurQ to PurL. This Thermococcus gammatolerans (strain DSM 15229 / JCM 11827 / EJ3) protein is Phosphoribosylformylglycinamidine synthase subunit PurL.